The sequence spans 1457 residues: ABC transporter G family member 36 (1457 aa).

Residues 14–43 (RLGGSMRGDSGSMWRRGDDVFSRSSREEDD) are disordered. Residues 28–39 (RRGDDVFSRSSR) show a composition bias toward basic and acidic residues. An ABC transporter 1 domain is found at 164 to 437 (GNALGILPNR…FESMGFKCPD (274 aa)). 197-204 (GPPGSGKT) is an ATP binding site. The region spanning 515-728 (ELLKANIDRE…AQNAISVNEL (214 aa)) is the ABC transmembrane type-2 1 domain. 7 helical membrane-spanning segments follow: residues 533–553 (FVYM…MTLF), 565–585 (SGGI…FNGF), 621–641 (IPIT…VIGF), 653–673 (LLML…GGAA), 677–697 (IVAN…GGFI), 706–726 (WWIW…ISVN), and 765–785 (IGFG…TLAL). The interval 821–841 (SSGSTRRPMGNGTENDSTIVD) is disordered. One can recognise an ABC transporter 2 domain in the interval 860–1112 (LSFDNVRYSV…ELIKYFESIP (253 aa)). 905 to 912 (GVSGAGKT) lines the ATP pocket. An ABC transmembrane type-2 2 domain is found at 1185–1399 (TQCMACLWKQ…TLYGLVVSQF (215 aa)). A run of 7 helical transmembrane segments spans residues 1209–1229 (FFFT…LGGK), 1244–1264 (YAAV…VVAV), 1292–1312 (IPYT…MIGF), 1319–1339 (FFWY…YGMM), 1349–1369 (IASI…GFVI), 1380–1400 (WYCW…SQFG), and 1429–1449 (WVAT…GFAI).

Belongs to the ABC transporter superfamily. ABCG family. PDR (TC 3.A.1.205) subfamily.

The protein localises to the membrane. Its function is as follows. May be a general defense protein. The polypeptide is ABC transporter G family member 36 (Oryza sativa subsp. japonica (Rice)).